The chain runs to 221 residues: MIEKNINIDIATYIDHSFLKPTATPEDIEQCCNEAQYFGFPTVCVYPSAVSQAVKLLHGQKIAVCTVIGFPTGANTSSVKLYEAQEATENGATELDIMINLGQVKAGSSEEIYNEISAICEATGQTIKVILETNLLTDTEKRLAAEICMDAGANYLKTCSGWFGGATVTDVRFLNNISQGRVGIKASGGIKTLEQAYELIEAGATRLGTSHGVALVQSQNG.

D96 acts as the Proton donor/acceptor in catalysis. K157 serves as the catalytic Schiff-base intermediate with acetaldehyde. Residue K185 is the Proton donor/acceptor of the active site.

This sequence belongs to the DeoC/FbaB aldolase family. DeoC type 1 subfamily.

It localises to the cytoplasm. The catalysed reaction is 2-deoxy-D-ribose 5-phosphate = D-glyceraldehyde 3-phosphate + acetaldehyde. The protein operates within carbohydrate degradation; 2-deoxy-D-ribose 1-phosphate degradation; D-glyceraldehyde 3-phosphate and acetaldehyde from 2-deoxy-alpha-D-ribose 1-phosphate: step 2/2. In terms of biological role, catalyzes a reversible aldol reaction between acetaldehyde and D-glyceraldehyde 3-phosphate to generate 2-deoxy-D-ribose 5-phosphate. This is Deoxyribose-phosphate aldolase from Crocosphaera subtropica (strain ATCC 51142 / BH68) (Cyanothece sp. (strain ATCC 51142)).